Here is a 413-residue protein sequence, read N- to C-terminus: Serine hydroxymethyltransferase (413 aa).

Residues L117 and 121–123 (GHL) contribute to the (6S)-5,6,7,8-tetrahydrofolate site. K226 is subject to N6-(pyridoxal phosphate)lysine. (6S)-5,6,7,8-tetrahydrofolate is bound by residues E239 and 349 to 351 (SPF).

Belongs to the SHMT family. In terms of assembly, homodimer. It depends on pyridoxal 5'-phosphate as a cofactor.

It is found in the cytoplasm. The enzyme catalyses (6R)-5,10-methylene-5,6,7,8-tetrahydrofolate + glycine + H2O = (6S)-5,6,7,8-tetrahydrofolate + L-serine. It functions in the pathway one-carbon metabolism; tetrahydrofolate interconversion. Its pathway is amino-acid biosynthesis; glycine biosynthesis; glycine from L-serine: step 1/1. Catalyzes the reversible interconversion of serine and glycine with tetrahydrofolate (THF) serving as the one-carbon carrier. This reaction serves as the major source of one-carbon groups required for the biosynthesis of purines, thymidylate, methionine, and other important biomolecules. Also exhibits THF-independent aldolase activity toward beta-hydroxyamino acids, producing glycine and aldehydes, via a retro-aldol mechanism. This Bacillus cytotoxicus (strain DSM 22905 / CIP 110041 / 391-98 / NVH 391-98) protein is Serine hydroxymethyltransferase.